A 946-amino-acid polypeptide reads, in one-letter code: Protein TMA108 (946 aa).

Serine 2 bears the N-acetylserine mark. 293–297 is a binding site for substrate; sequence MAMEN. Histidine 330 provides a ligand contact to Zn(2+). The active-site Proton acceptor is the glutamate 331. Histidine 334 and glutamate 353 together coordinate Zn(2+).

Belongs to the peptidase M1 family. Associates with ribosomal complexes. Zn(2+) serves as cofactor.

It is found in the cytoplasm. Its function is as follows. Putative zinc aminopeptidase which may be involved in ribosome biogenesis. The sequence is that of Protein TMA108 (TMA108) from Saccharomyces cerevisiae (strain ATCC 204508 / S288c) (Baker's yeast).